A 291-amino-acid chain; its full sequence is Transmembrane protein 41B (291 aa).

Over residues 1 to 11 the composition is skewed to basic and acidic residues; sequence MAKGRVAERSQ. Positions 1–38 are disordered; the sequence is MAKGRVAERSQTEMLHSTPAGDRAVGTQGSAAPGNKDH. Position 18 is a phosphothreonine (threonine 18). Helical transmembrane passes span 52 to 72, 109 to 129, 147 to 169, 197 to 217, 225 to 245, and 262 to 282; these read TSLL…FLVY, FYVQ…TFAI, LALF…LSYL, LINY…FINI, PLKV…FVAI, and SWNS…PAIF. The interval 140 to 251 is VTT domain; required for its function in autophagy; it reads GFLYPFPLAL…FVAIKAGTTL (112 aa).

Belongs to the TMEM41 family. Interacts with VMP1. Interacts with COPA, COPB1, VDAC1 and ERLIN2. Interacts with ATG2A. Interacts with SURF4.

The protein localises to the endoplasmic reticulum membrane. The protein resides in the endomembrane system. The enzyme catalyses a 1,2-diacyl-sn-glycero-3-phospho-L-serine(in) = a 1,2-diacyl-sn-glycero-3-phospho-L-serine(out). It catalyses the reaction cholesterol(in) = cholesterol(out). The catalysed reaction is a 1,2-diacyl-sn-glycero-3-phosphocholine(in) = a 1,2-diacyl-sn-glycero-3-phosphocholine(out). It carries out the reaction a 1,2-diacyl-sn-glycero-3-phosphoethanolamine(in) = a 1,2-diacyl-sn-glycero-3-phosphoethanolamine(out). Phospholipid scramblase involved in lipid homeostasis and membrane dynamics processes. Has phospholipid scramblase activity toward cholesterol and phosphatidylserine, as well as phosphatidylethanolamine and phosphatidylcholine. Required for autophagosome formation: participates in early stages of autophagosome biogenesis at the endoplasmic reticulum (ER) membrane by reequilibrating the leaflets of the ER as lipids are extracted by ATG2 (ATG2A or ATG2B) to mediate autophagosome assembly. In addition to autophagy, involved in other processes in which phospholipid scramblase activity is required. Required for normal motor neuron development. The chain is Transmembrane protein 41B from Rattus norvegicus (Rat).